Reading from the N-terminus, the 478-residue chain is Receptor-interacting serine/threonine-protein kinase 3 (478 aa).

Serine 2 is subject to Phosphoserine. The 269-residue stretch at 22–290 folds into the Protein kinase domain; it reads LENLGFVGKG…CESKTNNVYI (269 aa). ATP contacts are provided by residues 28 to 36 and lysine 51; that span reads VGKGGFGAV. Aspartate 143 serves as the catalytic Proton acceptor. Serine 165 carries the post-translational modification Phosphoserine. A Phosphothreonine modification is found at threonine 185. Phosphoserine; by autocatalysis is present on serine 201. Threonine 228 carries the phosphothreonine modification. The residue at position 229 (serine 229) is a Phosphoserine; by autocatalysis. Threonine 254 is subject to Phosphothreonine. Residues serine 301 and serine 323 each carry the phosphoserine modification. The tract at residues 311-330 is disordered; sequence RSSDTKLSARESSQKGTEVD. Positions 313 to 330 are enriched in basic and acidic residues; it reads SDTKLSARESSQKGTEVD. A Phosphothreonine modification is found at threonine 335. Serine 350, serine 369, and serine 380 each carry phosphoserine. A disordered region spans residues 362–429; the sequence is ERRGKEASFG…RNSNPWYTWN (68 aa). Positions 376-385 are enriched in polar residues; the sequence is AGTSSDTLAG. Position 392 is a phosphothreonine (threonine 392). Positions 413 to 429 are enriched in polar residues; sequence QRNQGDGRNSNPWYTWN. Positions 437 to 461 match the RIP homotypic interaction motif (RHIM) motif; that stretch reads LQSIVLNNCSEVQIGQHNCMSVQPR. Omega-N-methylarginine is present on arginine 474.

It belongs to the protein kinase superfamily. TKL Ser/Thr protein kinase family. In terms of assembly, interacts (via RIP homotypic interaction motif) with RIPK1 (via RIP homotypic interaction motif); this interaction induces RIPK1 phosphorylation and formation of a RIPK1-RIPK3 necrosis-inducing complex. Interacts with MLKL; the interaction is direct and triggers necroptosis. Interacts with ZBP1 (via RIP homotypic interaction motif); interaction with ZBP1 activates RIPK3, triggering necroptosis. Upon TNF-induced necrosis, the RIPK1-RIPK3 dimer further interacts with PGAM5 and MLKL; the formation of this complex leads to PGAM5 phosphorylation and increase in PGAM5 phosphatase activity. Binds TRAF2 and is recruited to the TNFR-1 signaling complex. Interacts with PYGL, GLUL and GLUD1; these interactions result in activation of these metabolic enzymes. Interacts with BIRC2/c-IAP1, BIRC3/c-IAP2 and XIAP/BIRC4. Interacts with ARHGEF2. Interacts with PELI1 (via atypical FHA domain); the phosphorylated form at Thr-185 binds preferentially to PELI1. Interacts with BUB1B, TRAF2 and STUB1. Interacts with CASP6. Component of the AIM2 PANoptosome complex, a multiprotein complex that drives inflammatory cell death (PANoptosis). In terms of processing, RIPK1 and RIPK3 undergo reciprocal auto- and trans-phosphorylation. Autophosphorylated following interaction with ZBP1. Phosphorylation of Ser-201 plays a role in the necroptotic function of RIPK3. Autophosphorylates at Thr-228 and Ser-229 following activation by ZBP1: phosphorylation at these sites is a hallmark of necroptosis and is required for binding MLKL. Phosphorylation at Thr-185 is important for its kinase activity, interaction with PELI1 and for its ability to mediate TNF-induced necroptosis. Polyubiquitinated with 'Lys-48' and 'Lys-63'-linked chains by BIRC2/c-IAP1 and BIRC3/c-IAP2, leading to activation of NF-kappa-B. Ubiquitinated by STUB1 leading to its subsequent proteasome-dependent degradation.

Its subcellular location is the cytoplasm. The protein resides in the cytosol. It is found in the nucleus. It catalyses the reaction L-seryl-[protein] + ATP = O-phospho-L-seryl-[protein] + ADP + H(+). The enzyme catalyses L-threonyl-[protein] + ATP = O-phospho-L-threonyl-[protein] + ADP + H(+). Activity is stimulated by ZBP1, which senses double-stranded Z-RNA structures. RIPK3-dependent necroptosis is inhibited by RIPK1: RIPK1 prevents the ZBP1-induced activation of RIPK3 via FADD-mediated recruitment of CASP8, which cleaves RIPK1 and limits TNF-induced necroptosis. Functionally, serine/threonine-protein kinase that activates necroptosis and apoptosis, two parallel forms of cell death. Necroptosis, a programmed cell death process in response to death-inducing TNF-alpha family members, is triggered by RIPK3 following activation by ZBP1. Activated RIPK3 forms a necrosis-inducing complex and mediates phosphorylation of MLKL, promoting MLKL localization to the plasma membrane and execution of programmed necrosis characterized by calcium influx and plasma membrane damage. In addition to TNF-induced necroptosis, necroptosis can also take place in the nucleus in response to orthomyxoviruses infection: following ZBP1 activation, which senses double-stranded Z-RNA structures, nuclear RIPK3 catalyzes phosphorylation and activation of MLKL, promoting disruption of the nuclear envelope and leakage of cellular DNA into the cytosol. Also regulates apoptosis: apoptosis depends on RIPK1, FADD and CASP8, and is independent of MLKL and RIPK3 kinase activity. Phosphorylates RIPK1: RIPK1 and RIPK3 undergo reciprocal auto- and trans-phosphorylation. In some cell types, also able to restrict viral replication by promoting cell death-independent responses. In response to flavivirus infection in neurons, promotes a cell death-independent pathway that restricts viral replication: together with ZBP1, promotes a death-independent transcriptional program that modifies the cellular metabolism via up-regulation expression of the enzyme ACOD1/IRG1 and production of the metabolite itaconate. Itaconate inhibits the activity of succinate dehydrogenase, generating a metabolic state in neurons that suppresses replication of viral genomes. RIPK3 binds to and enhances the activity of three metabolic enzymes: GLUL, GLUD1, and PYGL. These metabolic enzymes may eventually stimulate the tricarboxylic acid cycle and oxidative phosphorylation, which could result in enhanced ROS production. The sequence is that of Receptor-interacting serine/threonine-protein kinase 3 from Rattus norvegicus (Rat).